A 593-amino-acid chain; its full sequence is NADH-quinone oxidoreductase subunit C/D (593 aa).

The NADH dehydrogenase I subunit C stretch occupies residues 1-184 (MTADSALYIP…DPYSLSAAKQ (184 aa)). Residues 208-593 (DYMFLNLGPN…IDFVMADVDR (386 aa)) are NADH dehydrogenase I subunit D.

In the N-terminal section; belongs to the complex I 30 kDa subunit family. It in the C-terminal section; belongs to the complex I 49 kDa subunit family. As to quaternary structure, NDH-1 is composed of 13 different subunits. Subunits NuoB, CD, E, F, and G constitute the peripheral sector of the complex.

It localises to the cell inner membrane. The catalysed reaction is a quinone + NADH + 5 H(+)(in) = a quinol + NAD(+) + 4 H(+)(out). In terms of biological role, NDH-1 shuttles electrons from NADH, via FMN and iron-sulfur (Fe-S) centers, to quinones in the respiratory chain. The immediate electron acceptor for the enzyme in this species is believed to be ubiquinone. Couples the redox reaction to proton translocation (for every two electrons transferred, four hydrogen ions are translocated across the cytoplasmic membrane), and thus conserves the redox energy in a proton gradient. This is NADH-quinone oxidoreductase subunit C/D from Pseudomonas aeruginosa (strain UCBPP-PA14).